A 152-amino-acid chain; its full sequence is Small ribosomal subunit protein uS15 (152 aa).

Over residues M1–K11 the composition is skewed to basic residues. Residues M1–W25 are disordered.

It belongs to the universal ribosomal protein uS15 family. In terms of assembly, part of the 30S ribosomal subunit.

The chain is Small ribosomal subunit protein uS15 from Methanoregula boonei (strain DSM 21154 / JCM 14090 / 6A8).